The following is a 312-amino-acid chain: MANRTVKDAHSIHGTNPQYLVEKIIRTRIYESKYWKEECFGLTAELVVDKAMELRFVGGVYGGNIKPTPFLCLTLKMLQIQPEKDIIVEFIKNEDFKYVRMLGALYMRLTGTAIDCYKYLEPLYNDYRKIKSQNRNGEFELMHVDEFIDELLHSERVCDIILPRLQKRYVLEEAEQLEPRVSALEEDMDDVESSEEEEEEDEKLERVPSPDHRRRSYRDLDKPRRSPTLRYRRSRSRSPRRRSRSPKRRSPSPRRERHRSKSPRRHRSRSRDRRHRSRSKSPGHHRSHRHRSHSKSPERSKKSHKKSRRGNE.

Residues 1–179 (MANRTVKDAH…VLEEAEQLEP (179 aa)) form an N-terminal protein interaction domain region. Phosphoserine is present on residues serine 11, serine 193, serine 194, serine 209, and serine 226. Residues 170–204 (VLEEAEQLEPRVSALEEDMDDVESSEEEEEEDEKL) adopt a coiled-coil conformation. Positions 181–312 (VSALEEDMDD…SHKKSRRGNE (132 aa)) are disordered. Over residues 184–202 (LEEDMDDVESSEEEEEEDE) the composition is skewed to acidic residues. Positions 203 to 224 (KLERVPSPDHRRRSYRDLDKPR) are enriched in basic and acidic residues. Basic residues-rich tracts occupy residues 225 to 294 (RSPT…RSHS) and 301 to 312 (KKSHKKSRRGNE).

Belongs to the PRP38 family. In terms of assembly, component of the spliceosome B complex. Interacts (via N-terminal interaction domain) with ZMAT2 and MFAP1.

It localises to the nucleus. Functionally, involved in pre-mRNA splicing as a component of the spliceosome. The sequence is that of Pre-mRNA-splicing factor 38A (PRPF38A) from Bos taurus (Bovine).